Reading from the N-terminus, the 545-residue chain is Sphingomyelin phosphodiesterase 5 (545 aa).

A mitochondrion-targeting transit peptide spans 1 to 35 (MSLRESPFPNGFLEGLHAVGWGLIFPCFWFLDRLI). At 36-64 (AVCISTTLERMWRLEQECYLHPLKVVFGS) the chain is on the mitochondrial matrix side. Residues 65 to 85 (ILFFILFVISTPFALLGFILW) traverse the membrane as a helical; Signal-anchor for type II membrane protein segment. Over 86–545 (APLQAIRRPF…LSVSLDSEQN (460 aa)) the chain is Mitochondrial intermembrane. Glutamate 258 contacts Mg(2+). Histidine 529 acts as the Proton acceptor in catalysis.

It belongs to the neutral sphingomyelinase family. Requires Mg(2+) as cofactor. Mn(2+) is required as a cofactor.

It localises to the mitochondrion inner membrane. It is found in the endoplasmic reticulum membrane. The enzyme catalyses a sphingomyelin + H2O = phosphocholine + an N-acylsphing-4-enine + H(+). It catalyses the reaction N-(hexadecanoyl)-sphing-4-enine-1-phosphocholine + H2O = N-hexadecanoylsphing-4-enine + phosphocholine + H(+). It participates in lipid metabolism; sphingolipid metabolism. With respect to regulation, activated by the phospholipids cardiolipin, phosphatidylserine, and phosphatidylethanolamine. Strongest activation with cardiolipin. Functionally, catalyzes the hydrolysis of membrane sphingomyelin to form phosphorylcholine and ceramide. This Danio rerio (Zebrafish) protein is Sphingomyelin phosphodiesterase 5.